The primary structure comprises 208 residues: Imidazoleglycerol-phosphate dehydratase (208 aa).

The protein belongs to the imidazoleglycerol-phosphate dehydratase family.

The protein localises to the cytoplasm. The catalysed reaction is D-erythro-1-(imidazol-4-yl)glycerol 3-phosphate = 3-(imidazol-4-yl)-2-oxopropyl phosphate + H2O. It participates in amino-acid biosynthesis; L-histidine biosynthesis; L-histidine from 5-phospho-alpha-D-ribose 1-diphosphate: step 6/9. This chain is Imidazoleglycerol-phosphate dehydratase, found in Mycobacterium sp. (strain JLS).